The primary structure comprises 67 residues: Cell division protein ZapB (67 aa).

Residues 3–59 (LELLSQLETKIQTALETIELLKLELDEEKEKAANLAEQNHQLKQELSSWNDKITGLV) are a coiled coil.

This sequence belongs to the ZapB family. In terms of assembly, homodimer. The ends of the coiled-coil dimer bind to each other, forming polymers. Interacts with FtsZ.

Its subcellular location is the cytoplasm. Functionally, non-essential, abundant cell division factor that is required for proper Z-ring formation. It is recruited early to the divisome by direct interaction with FtsZ, stimulating Z-ring assembly and thereby promoting cell division earlier in the cell cycle. Its recruitment to the Z-ring requires functional FtsA or ZipA. This chain is Cell division protein ZapB, found in Shewanella amazonensis (strain ATCC BAA-1098 / SB2B).